We begin with the raw amino-acid sequence, 276 residues long: Ribosomal RNA small subunit methyltransferase A (276 aa).

6 residues coordinate S-adenosyl-L-methionine: asparagine 16, leucine 18, glycine 43, glutamate 64, aspartate 89, and asparagine 109.

Belongs to the class I-like SAM-binding methyltransferase superfamily. rRNA adenine N(6)-methyltransferase family. RsmA subfamily.

The protein localises to the cytoplasm. It carries out the reaction adenosine(1518)/adenosine(1519) in 16S rRNA + 4 S-adenosyl-L-methionine = N(6)-dimethyladenosine(1518)/N(6)-dimethyladenosine(1519) in 16S rRNA + 4 S-adenosyl-L-homocysteine + 4 H(+). In terms of biological role, specifically dimethylates two adjacent adenosines (A1518 and A1519) in the loop of a conserved hairpin near the 3'-end of 16S rRNA in the 30S particle. May play a critical role in biogenesis of 30S subunits. The polypeptide is Ribosomal RNA small subunit methyltransferase A (Marinobacter nauticus (strain ATCC 700491 / DSM 11845 / VT8) (Marinobacter aquaeolei)).